A 607-amino-acid polypeptide reads, in one-letter code: Elongation factor 4 (607 aa).

The tr-type G domain maps to 11–193 (EKIRNFSIIA…QIVEKVPAPT (183 aa)). GTP is bound by residues 23–28 (DHGKST) and 140–143 (NKID).

This sequence belongs to the TRAFAC class translation factor GTPase superfamily. Classic translation factor GTPase family. LepA subfamily.

The protein localises to the cell membrane. It catalyses the reaction GTP + H2O = GDP + phosphate + H(+). Its function is as follows. Required for accurate and efficient protein synthesis under certain stress conditions. May act as a fidelity factor of the translation reaction, by catalyzing a one-codon backward translocation of tRNAs on improperly translocated ribosomes. Back-translocation proceeds from a post-translocation (POST) complex to a pre-translocation (PRE) complex, thus giving elongation factor G a second chance to translocate the tRNAs correctly. Binds to ribosomes in a GTP-dependent manner. This chain is Elongation factor 4, found in Streptococcus pneumoniae serotype 19F (strain G54).